A 118-amino-acid polypeptide reads, in one-letter code: uncharacterized protein (118 aa).

3 consecutive transmembrane segments (helical) span residues 6–26 (ILIL…PFMV), 43–63 (ALSC…IHVL), and 84–104 (IFKV…VLVQ).

Belongs to the AzlD/HI_1737/HP1330 family.

It is found in the cell membrane. This is an uncharacterized protein from Helicobacter pylori (strain J99 / ATCC 700824) (Campylobacter pylori J99).